The sequence spans 356 residues: tRNA-specific 2-thiouridylase MnmA 2 (356 aa).

Residues 8 to 15 (GMSGGVDS) and M34 contribute to the ATP site. The Nucleophile role is filled by C103. Cysteines 103 and 199 form a disulfide. G127 contributes to the ATP binding site. The segment at 149-151 (KDQ) is interaction with tRNA. Catalysis depends on C199, which acts as the Cysteine persulfide intermediate. Residues 305–306 (RY) form an interaction with tRNA region.

The protein belongs to the MnmA/TRMU family.

The protein resides in the cytoplasm. The catalysed reaction is S-sulfanyl-L-cysteinyl-[protein] + uridine(34) in tRNA + AH2 + ATP = 2-thiouridine(34) in tRNA + L-cysteinyl-[protein] + A + AMP + diphosphate + H(+). Its function is as follows. Catalyzes the 2-thiolation of uridine at the wobble position (U34) of tRNA, leading to the formation of s(2)U34. This is tRNA-specific 2-thiouridylase MnmA 2 from Clostridium botulinum (strain Okra / Type B1).